The primary structure comprises 95 residues: FXYD domain-containing ion transport regulator 6 (95 aa).

The N-terminal stretch at 1–18 is a signal peptide; the sequence is MELVLVFLCSLLAPMVLA. Residues 19–35 are Extracellular-facing; it reads STAEKEKEMDPFHYDYQ. A helical transmembrane segment spans residues 36-58; the sequence is TLRIGGLVFAVVLFSVGILLILS. Topologically, residues 59-95 are cytoplasmic; the sequence is RRCKCSFNQKPRAPGDEEAQVENLITANATEPQKAEN.

This sequence belongs to the FXYD family. Regulatory subunit of the sodium/potassium-transporting ATPase which is composed of a catalytic alpha subunit, a non-catalytic beta subunit and an additional regulatory subunit. The regulatory subunit, a member of the FXYD protein family, modulates the enzymatic activity in a tissue- and isoform-specific way by changing affinities of the Na+/K+-ATPase toward Na(+), K(+) or ATP.

Its subcellular location is the cell membrane. In terms of biological role, associates with and regulates the activity of the sodium/potassium-transporting ATPase (NKA) which catalyzes the hydrolysis of ATP coupled with the exchange of Na(+) and K(+) ions across the plasma membrane. Reduces the apparent affinity for intracellular Na(+) with no change in the apparent affinity for extracellular K(+). In addition to modulating NKA kinetics, may also function as a regulator of NKA localization to the plasma membrane. The protein is FXYD domain-containing ion transport regulator 6 (FXYD6) of Macaca fascicularis (Crab-eating macaque).